The chain runs to 120 residues: NAD(P)H-quinone oxidoreductase subunit 3, chloroplastic (120 aa).

A run of 3 helical transmembrane segments spans residues 7–27, 64–84, and 88–108; these read YETF…AFLI, MFAL…PWAM, and ILGI…IVGS.

This sequence belongs to the complex I subunit 3 family. In terms of assembly, NDH is composed of at least 16 different subunits, 5 of which are encoded in the nucleus.

The protein resides in the plastid. Its subcellular location is the chloroplast thylakoid membrane. It catalyses the reaction a plastoquinone + NADH + (n+1) H(+)(in) = a plastoquinol + NAD(+) + n H(+)(out). The catalysed reaction is a plastoquinone + NADPH + (n+1) H(+)(in) = a plastoquinol + NADP(+) + n H(+)(out). In terms of biological role, NDH shuttles electrons from NAD(P)H:plastoquinone, via FMN and iron-sulfur (Fe-S) centers, to quinones in the photosynthetic chain and possibly in a chloroplast respiratory chain. The immediate electron acceptor for the enzyme in this species is believed to be plastoquinone. Couples the redox reaction to proton translocation, and thus conserves the redox energy in a proton gradient. This Cycas taitungensis (Prince sago) protein is NAD(P)H-quinone oxidoreductase subunit 3, chloroplastic.